A 750-amino-acid polypeptide reads, in one-letter code: 5-methyltetrahydropteroyltriglutamate--homocysteine methyltransferase (750 aa).

5-methyltetrahydropteroyltri-L-glutamate-binding positions include 15–18 (RELK) and lysine 114. L-homocysteine contacts are provided by residues 425 to 427 (IGS) and glutamate 478. L-methionine-binding positions include 425-427 (IGS) and glutamate 478. Tryptophan 555 contacts 5-methyltetrahydropteroyltri-L-glutamate. Aspartate 593 is an L-homocysteine binding site. Aspartate 593 is a binding site for L-methionine. Glutamate 599 is a 5-methyltetrahydropteroyltri-L-glutamate binding site. Zn(2+) contacts are provided by histidine 636, cysteine 638, and glutamate 660. Histidine 689 functions as the Proton donor in the catalytic mechanism. A Zn(2+)-binding site is contributed by cysteine 721.

The protein belongs to the vitamin-B12 independent methionine synthase family. Zn(2+) is required as a cofactor.

The enzyme catalyses 5-methyltetrahydropteroyltri-L-glutamate + L-homocysteine = tetrahydropteroyltri-L-glutamate + L-methionine. It participates in amino-acid biosynthesis; L-methionine biosynthesis via de novo pathway; L-methionine from L-homocysteine (MetE route): step 1/1. Its function is as follows. Catalyzes the transfer of a methyl group from 5-methyltetrahydrofolate to homocysteine resulting in methionine formation. The protein is 5-methyltetrahydropteroyltriglutamate--homocysteine methyltransferase of Streptococcus sanguinis (strain SK36).